A 299-amino-acid chain; its full sequence is Glycine--tRNA ligase alpha subunit (299 aa).

The protein belongs to the class-II aminoacyl-tRNA synthetase family. In terms of assembly, tetramer of two alpha and two beta subunits.

It is found in the cytoplasm. It catalyses the reaction tRNA(Gly) + glycine + ATP = glycyl-tRNA(Gly) + AMP + diphosphate. The protein is Glycine--tRNA ligase alpha subunit of Lactiplantibacillus plantarum (strain ATCC BAA-793 / NCIMB 8826 / WCFS1) (Lactobacillus plantarum).